Reading from the N-terminus, the 959-residue chain is Glycine dehydrogenase (decarboxylating) (959 aa).

Lys704 bears the N6-(pyridoxal phosphate)lysine mark.

It belongs to the GcvP family. The glycine cleavage system is composed of four proteins: P, T, L and H. The cofactor is pyridoxal 5'-phosphate.

It catalyses the reaction N(6)-[(R)-lipoyl]-L-lysyl-[glycine-cleavage complex H protein] + glycine + H(+) = N(6)-[(R)-S(8)-aminomethyldihydrolipoyl]-L-lysyl-[glycine-cleavage complex H protein] + CO2. In terms of biological role, the glycine cleavage system catalyzes the degradation of glycine. The P protein binds the alpha-amino group of glycine through its pyridoxal phosphate cofactor; CO(2) is released and the remaining methylamine moiety is then transferred to the lipoamide cofactor of the H protein. This is Glycine dehydrogenase (decarboxylating) from Parasynechococcus marenigrum (strain WH8102).